The following is a 405-amino-acid chain: Acetylornithine aminotransferase 1 (405 aa).

Residues 108–109 (GA) and F141 contribute to the pyridoxal 5'-phosphate site. R144 provides a ligand contact to N(2)-acetyl-L-ornithine. 226-229 (DEVQ) serves as a coordination point for pyridoxal 5'-phosphate. Residue K255 is modified to N6-(pyridoxal phosphate)lysine. T283 provides a ligand contact to N(2)-acetyl-L-ornithine. T284 is a pyridoxal 5'-phosphate binding site.

It belongs to the class-III pyridoxal-phosphate-dependent aminotransferase family. ArgD subfamily. As to quaternary structure, homodimer. Pyridoxal 5'-phosphate serves as cofactor.

It is found in the cytoplasm. It catalyses the reaction N(2)-acetyl-L-ornithine + 2-oxoglutarate = N-acetyl-L-glutamate 5-semialdehyde + L-glutamate. It functions in the pathway amino-acid biosynthesis; L-arginine biosynthesis; N(2)-acetyl-L-ornithine from L-glutamate: step 4/4. The sequence is that of Acetylornithine aminotransferase 1 from Pseudomonas syringae pv. tomato (strain ATCC BAA-871 / DC3000).